The chain runs to 146 residues: Mitochondrial import receptor subunit TOM20 homolog B (146 aa).

At 1–5 (MMGGS) the chain is on the mitochondrial intermembrane side. A helical transmembrane segment spans residues 6–25 (SSRIAAGLGAALFVGYCIYF). The Cytoplasmic portion of the chain corresponds to 26-146 (DRKRRSDPNY…AQSISDDDIE (121 aa)). Residues 37–47 (NKLRERRKKQK) show a composition bias toward basic residues. The segment at 37 to 56 (NKLRERRKKQKAAQEKAGLS) is disordered. Serine 141 carries the phosphoserine modification.

It belongs to the Tom20 family. As to quaternary structure, forms part of the preprotein translocase complex of the outer mitochondrial membrane (TOM complex). Interacts with tom22.

Its subcellular location is the mitochondrion outer membrane. Its function is as follows. Central component of the receptor complex responsible for the recognition and translocation of cytosolically synthesized mitochondrial preproteins. Together with tom22 functions as the transit peptide receptor at the surface of the mitochondrion outer membrane and facilitates the movement of preproteins into the tom40 translocation pore. In Danio rerio (Zebrafish), this protein is Mitochondrial import receptor subunit TOM20 homolog B (tomm20b).